A 355-amino-acid polypeptide reads, in one-letter code: tRNA N6-adenosine threonylcarbamoyltransferase (355 aa).

Fe cation contacts are provided by histidine 110 and histidine 114. Substrate-binding positions include 132–136 (LVSGG), aspartate 165, glycine 178, aspartate 182, and asparagine 288. Residue aspartate 316 participates in Fe cation binding.

The protein belongs to the KAE1 / TsaD family. Requires Fe(2+) as cofactor.

The protein resides in the cytoplasm. The catalysed reaction is L-threonylcarbamoyladenylate + adenosine(37) in tRNA = N(6)-L-threonylcarbamoyladenosine(37) in tRNA + AMP + H(+). Required for the formation of a threonylcarbamoyl group on adenosine at position 37 (t(6)A37) in tRNAs that read codons beginning with adenine. Is involved in the transfer of the threonylcarbamoyl moiety of threonylcarbamoyl-AMP (TC-AMP) to the N6 group of A37, together with TsaE and TsaB. TsaD likely plays a direct catalytic role in this reaction. This chain is tRNA N6-adenosine threonylcarbamoyltransferase, found in Lawsonia intracellularis (strain PHE/MN1-00).